An 86-amino-acid polypeptide reads, in one-letter code: Toxin Aam2 (86 aa).

A signal peptide spans 1–20 (MNYLITISLALLLMTGVASG). Residues 22–84 (RDGYIADAGN…VPIKVPGKCN (63 aa)) form the LCN-type CS-alpha/beta domain. 4 disulfides stabilise this stretch: cysteine 32/cysteine 83, cysteine 36/cysteine 56, cysteine 42/cysteine 66, and cysteine 46/cysteine 68. Asparagine 84 carries the post-translational modification Asparagine amide.

The protein belongs to the long (4 C-C) scorpion toxin superfamily. Sodium channel inhibitor family. Alpha subfamily. Expressed by the venom gland.

The protein localises to the secreted. In terms of biological role, alpha toxins bind voltage-independently at site-3 of sodium channels (Nav) and inhibit the inactivation of the activated channels, thereby blocking neuronal transmission. This is Toxin Aam2 from Androctonus amoreuxi (African fattail scorpion).